The following is a 420-amino-acid chain: Acetyl-CoA acetyltransferase, mitochondrial (420 aa).

Residues 1–26 constitute a mitochondrion transit peptide; sequence MTSRALYSTRSQLCRHLAHKYLSRSY. Cys-119 serves as the catalytic Acyl-thioester intermediate. CoA contacts are provided by residues Tyr-212, 251–253, and Lys-256; that span reads KVD. Tyr-212 is a K(+) binding site. K(+) contacts are provided by Ala-273, Ala-274, and Ala-276. Ser-277 provides a ligand contact to CoA. Position 374 (Val-374) interacts with K(+). Residue Cys-406 is the Proton donor/acceptor of the active site.

It belongs to the thiolase-like superfamily. Thiolase family. As to quaternary structure, homotetramer.

It localises to the mitochondrion. The enzyme catalyses 2 acetyl-CoA = acetoacetyl-CoA + CoA. It catalyses the reaction propanoyl-CoA + acetyl-CoA = 2-methyl-3-oxobutanoyl-CoA + CoA. It participates in lipid metabolism; fatty acid beta-oxidation. This is one of the enzymes that catalyzes the last step of the mitochondrial beta-oxidation pathway, an aerobic process breaking down fatty acids into acetyl-CoA. Using free coenzyme A/CoA, catalyzes the thiolytic cleavage of medium- to long-chain 3-oxoacyl-CoAs into acetyl-CoA and a fatty acyl-CoA shortened by two carbon atoms. The activity of the enzyme is reversible and it can also catalyze the condensation of two acetyl-CoA molecules into acetoacetyl-CoA. Thereby, it plays a major role in ketone body metabolism. This Danio rerio (Zebrafish) protein is Acetyl-CoA acetyltransferase, mitochondrial (acat1).